The primary structure comprises 339 residues: D-alanine--D-alanine ligase (339 aa).

The ATP-grasp domain maps to 126–333 (KQVLDSAGIP…YSELVTRLVE (208 aa)). 158-213 (AAELGYPLFVKPANLGSSVGISKVGSPEELDAALTLAFGLDRRVILEAMTPHKPRE) contacts ATP. Mg(2+)-binding residues include aspartate 286, glutamate 300, and asparagine 302.

It belongs to the D-alanine--D-alanine ligase family. Mg(2+) serves as cofactor. It depends on Mn(2+) as a cofactor.

Its subcellular location is the cytoplasm. The catalysed reaction is 2 D-alanine + ATP = D-alanyl-D-alanine + ADP + phosphate + H(+). The protein operates within cell wall biogenesis; peptidoglycan biosynthesis. In terms of biological role, cell wall formation. This is D-alanine--D-alanine ligase from Deinococcus radiodurans (strain ATCC 13939 / DSM 20539 / JCM 16871 / CCUG 27074 / LMG 4051 / NBRC 15346 / NCIMB 9279 / VKM B-1422 / R1).